Consider the following 662-residue polypeptide: DNA ligase (662 aa).

NAD(+) contacts are provided by residues Asp-31–Asp-35 and Ser-79–Leu-80. Lys-121 serves as the catalytic N6-AMP-lysine intermediate. Residues Arg-143, Glu-177, and Lys-313 each coordinate NAD(+). Positions 406, 409, 422, and 428 each coordinate Zn(2+). Positions Val-586–Ile-662 constitute a BRCT domain.

This sequence belongs to the NAD-dependent DNA ligase family. LigA subfamily. Mg(2+) serves as cofactor. Mn(2+) is required as a cofactor.

It catalyses the reaction NAD(+) + (deoxyribonucleotide)n-3'-hydroxyl + 5'-phospho-(deoxyribonucleotide)m = (deoxyribonucleotide)n+m + AMP + beta-nicotinamide D-nucleotide.. In terms of biological role, DNA ligase that catalyzes the formation of phosphodiester linkages between 5'-phosphoryl and 3'-hydroxyl groups in double-stranded DNA using NAD as a coenzyme and as the energy source for the reaction. It is essential for DNA replication and repair of damaged DNA. This chain is DNA ligase, found in Clostridium perfringens (strain 13 / Type A).